A 174-amino-acid chain; its full sequence is Large ribosomal subunit protein uL10 (174 aa).

This sequence belongs to the universal ribosomal protein uL10 family. Part of the ribosomal stalk of the 50S ribosomal subunit. The N-terminus interacts with L11 and the large rRNA to form the base of the stalk. The C-terminus forms an elongated spine to which L12 dimers bind in a sequential fashion forming a multimeric L10(L12)X complex.

Functionally, forms part of the ribosomal stalk, playing a central role in the interaction of the ribosome with GTP-bound translation factors. This chain is Large ribosomal subunit protein uL10, found in Anaeromyxobacter dehalogenans (strain 2CP-1 / ATCC BAA-258).